A 96-amino-acid chain; its full sequence is Large ribosomal subunit protein bL21 (96 aa).

Over residues 73-84 (KRRKRYQSRNGH) the composition is skewed to basic residues. Residues 73-96 (KRRKRYQSRNGHRQQMTQIEVVSL) are disordered. Residues 85 to 96 (RQQMTQIEVVSL) show a composition bias toward polar residues.

It belongs to the bacterial ribosomal protein bL21 family. In terms of assembly, part of the 50S ribosomal subunit. Contacts protein L20.

In terms of biological role, this protein binds to 23S rRNA in the presence of protein L20. This is Large ribosomal subunit protein bL21 from Chlorobium luteolum (strain DSM 273 / BCRC 81028 / 2530) (Pelodictyon luteolum).